The sequence spans 206 residues: Large ribosomal subunit protein bL25 (206 aa).

Belongs to the bacterial ribosomal protein bL25 family. CTC subfamily. As to quaternary structure, part of the 50S ribosomal subunit; part of the 5S rRNA/L5/L18/L25 subcomplex. Contacts the 5S rRNA. Binds to the 5S rRNA independently of L5 and L18.

Its function is as follows. This is one of the proteins that binds to the 5S RNA in the ribosome where it forms part of the central protuberance. The chain is Large ribosomal subunit protein bL25 from Ralstonia nicotianae (strain ATCC BAA-1114 / GMI1000) (Ralstonia solanacearum).